Consider the following 500-residue polypeptide: Farnesylcysteine lyase (500 aa).

Residues 1–24 form the signal peptide; it reads MKDFPIAISLLFALLSPVLLPCSG. N-linked (GlcNAc...) asparagine glycans are attached at residues Asn-56, Asn-113, Asn-211, and Asn-281.

This sequence belongs to the prenylcysteine oxidase family. FAD serves as cofactor. As to expression, expressed in seedilings, flowers, stems, leaves and roots.

It localises to the lysosome. It catalyses the reaction S-(2E,6E)-farnesyl-L-cysteine + O2 + H2O = (2E,6E)-farnesal + L-cysteine + H2O2. In terms of biological role, involved in the degradation of prenylcysteine. Cleaves specifically the thioether bond of S-farnesyl-L-cysteine and has no activity with S-geranylgeranyl-L-cysteine. Also recognizes N-acetyl-farnesylcysteine and may have a role in deprenylation of farnesylated proteins. This is Farnesylcysteine lyase from Arabidopsis thaliana (Mouse-ear cress).